We begin with the raw amino-acid sequence, 477 residues long: Otolin-1 (477 aa).

A signal peptide spans 1 to 23 (MWMFSWLCAILIILAIAGMNTIA). Disordered stretches follow at residues 28–55 (HTKF…PEEE) and 111–337 (QKGE…KGEL). Basic and acidic residues predominate over residues 33–42 (KKSEEREMPK). Residues 116–175 (GETGQPGPKGEAGNLGIPGPPGVVGPQGPRGYKGEKGLKGERGDQGVPGYPGKPGAQGEP) form the Collagen-like 1 domain. 2 positions are modified to hydroxyproline: Pro-133 and Pro-136. Over residues 147-159 (YKGEKGLKGERGD) the composition is skewed to basic and acidic residues. A hydroxyproline mark is found at Pro-163, Pro-166, and Pro-169. Lys-178 carries the 5-hydroxylysine modification. O-linked (Gal...) hydroxylysine glycosylation occurs at Lys-178. The segment covering 182–191 (GNIGLGGVKG) has biased composition (gly residues). An N-linked (GlcNAc...) asparagine glycan is attached at Asn-202. 2 Collagen-like domains span residues 209-268 (GDQG…KGSK) and 278-337 (GRNG…KGEL). Pro-223 is modified (hydroxyproline). Composition is skewed to basic and acidic residues over residues 226 to 240 (KGEK…EMGD) and 247 to 277 (SGER…EGKS). Hydroxyproline occurs at positions 283 and 301. Residues 298 to 310 (LGPPGLLGPTGPK) show a composition bias toward low complexity. A 5-hydroxylysine modification is found at Lys-310. Lys-310 carries an O-linked (Gal...) hydroxylysine glycan. Residues 338-473 (ARVPRSAFSA…GFLLYPEETS (136 aa)) enclose the C1q domain. N-linked (GlcNAc...) asparagine glycosylation is present at Asn-381.

It belongs to the OTOL1 family. Homooligomer; disulfide-linked; probably forms homotrimers. Interacts with OC90. Interacts with CBLN1.

It localises to the secreted. Its subcellular location is the extracellular space. The protein resides in the extracellular matrix. Collagen-like protein specifically expressed in the inner ear, which provides an organic scaffold for otoconia, a calcium carbonate structure in the saccule and utricle of the ear. Acts as a scaffold for biomineralization: sequesters calcium and forms interconnecting fibrils between otoconia that are incorporated into the calcium crystal structure. Together with OC90, modulates calcite crystal morphology and growth kinetics. This Homo sapiens (Human) protein is Otolin-1.